We begin with the raw amino-acid sequence, 326 residues long: L-Ala--D-Glu endopeptidase (326 aa).

The signal sequence occupies residues Met-1 to Ala-19. The Zn(2+) site is built by His-204, Asp-208, His-292, and His-294.

The protein belongs to the peptidase M23B family. Zn(2+) is required as a cofactor.

L-Ala--D-Glu endopeptidase involved in production of single L-alanine side chains from tetrapeptides in the spore cortex peptidoglycan. Therefore, is required for the endospore cortex maturation. The polypeptide is L-Ala--D-Glu endopeptidase (lytH) (Bacillus subtilis (strain 168)).